The following is a 78-amino-acid chain: Large ribosomal subunit protein bL28 (78 aa).

Residues 1-23 are disordered; the sequence is MSRKCQITGKKANNAMAVSHSHR.

Belongs to the bacterial ribosomal protein bL28 family.

The chain is Large ribosomal subunit protein bL28 from Picosynechococcus sp. (strain ATCC 27264 / PCC 7002 / PR-6) (Agmenellum quadruplicatum).